A 347-amino-acid chain; its full sequence is KIN17-like protein KLP (347 aa).

Positions Lys-222–Arg-225 match the Nuclear localization signal (NLS) motif.

This sequence belongs to the KIN17 family.

The protein localises to the cytoplasm. Its subcellular location is the nucleus. Its function is as follows. May act as repressor of root growth during copper excess and of hypocotyl growth in the dark. The protein is KIN17-like protein KLP of Arabidopsis thaliana (Mouse-ear cress).